Consider the following 224-residue polypeptide: Peroxynitrite isomerase 2 (224 aa).

Positions 71–77 (GVWRGEG) match the GXWXGXG motif. The heme b site is built by Lys-187 and His-214.

The protein belongs to the nitrobindin family. In terms of assembly, homodimer. The cofactor is heme b.

It catalyses the reaction peroxynitrite = nitrate. The protein operates within nitrogen metabolism. Heme-binding protein able to scavenge peroxynitrite and to protect free L-tyrosine against peroxynitrite-mediated nitration, by acting as a peroxynitrite isomerase that converts peroxynitrite to nitrate. Therefore, this protein likely plays a role in peroxynitrite sensing and in the detoxification of reactive nitrogen and oxygen species (RNS and ROS, respectively). Is able to bind nitric oxide (NO) in vitro, but may act as a sensor of peroxynitrite levels in vivo. In Mycobacterium sp. (strain JLS), this protein is Peroxynitrite isomerase 2.